The primary structure comprises 81 residues: Small ribosomal subunit protein bS18 (81 aa).

Belongs to the bacterial ribosomal protein bS18 family. In terms of assembly, part of the 30S ribosomal subunit. Forms a tight heterodimer with protein bS6.

Binds as a heterodimer with protein bS6 to the central domain of the 16S rRNA, where it helps stabilize the platform of the 30S subunit. This chain is Small ribosomal subunit protein bS18, found in Desulfotalea psychrophila (strain LSv54 / DSM 12343).